Reading from the N-terminus, the 65-residue chain is Large ribosomal subunit protein uL29 (65 aa).

The protein belongs to the universal ribosomal protein uL29 family.

This is Large ribosomal subunit protein uL29 from Methylococcus capsulatus (strain ATCC 33009 / NCIMB 11132 / Bath).